The chain runs to 630 residues: Transferrin-binding protein B (630 aa).

The signal sequence occupies residues 1–17 (MKSVPLITGGLSFLLSA). Cysteine 18 carries the N-palmitoyl cysteine lipid modification. Cysteine 18 is lipidated: S-diacylglycerol cysteine. 3 disordered regions span residues 26-53 (DVDD…KSNL), 280-301 (VTPT…LEGG), and 591-613 (NNPT…SPNA). Residues 32–50 (NPSSSKPRYQDDTSSSRTK) show a composition bias toward polar residues.

The protein belongs to the TbpB family.

It localises to the cell outer membrane. Its subcellular location is the cell surface. Haemophilus acquires iron by extracting it from serum transferrin (TF) in its human host. Acts as a transferrin receptor and is required for transferrin utilization. The polypeptide is Transferrin-binding protein B (Haemophilus influenzae (strain 86-028NP)).